The sequence spans 439 residues: Homogentisate 1,2-dioxygenase (439 aa).

His-293 (proton acceptor) is an active-site residue. Fe cation-binding residues include His-336 and Glu-342. Homogentisate is bound by residues Tyr-351 and His-372. His-372 provides a ligand contact to Fe cation.

It belongs to the homogentisate dioxygenase family. In terms of assembly, hexamer; dimer of trimers. Fe cation serves as cofactor.

The catalysed reaction is homogentisate + O2 = 4-maleylacetoacetate + H(+). It functions in the pathway amino-acid degradation; L-phenylalanine degradation; acetoacetate and fumarate from L-phenylalanine: step 4/6. In terms of biological role, involved in the catabolism of homogentisate (2,5-dihydroxyphenylacetate or 2,5-OH-PhAc), a central intermediate in the degradation of phenylalanine and tyrosine. Catalyzes the oxidative ring cleavage of the aromatic ring of homogentisate to yield maleylacetoacetate. The chain is Homogentisate 1,2-dioxygenase from Cupriavidus pinatubonensis (strain JMP 134 / LMG 1197) (Cupriavidus necator (strain JMP 134)).